We begin with the raw amino-acid sequence, 469 residues long: Adenosylhomocysteinase (469 aa).

T58, D133, and E195 together coordinate substrate. NAD(+) is bound at residue 196-198 (TTT). Substrate is bound by residues K225 and D229. Residues N230, 259 to 264 (GFGDVG), E282, N317, 338 to 340 (IGH), and N383 contribute to the NAD(+) site.

The protein belongs to the adenosylhomocysteinase family. NAD(+) is required as a cofactor.

The protein localises to the cytoplasm. It catalyses the reaction S-adenosyl-L-homocysteine + H2O = L-homocysteine + adenosine. It functions in the pathway amino-acid biosynthesis; L-homocysteine biosynthesis; L-homocysteine from S-adenosyl-L-homocysteine: step 1/1. May play a key role in the regulation of the intracellular concentration of adenosylhomocysteine. The chain is Adenosylhomocysteinase from Rhodopseudomonas palustris (strain ATCC BAA-98 / CGA009).